The following is a 489-amino-acid chain: Phosphoglucosamine mutase (489 aa).

S136 functions as the Phosphoserine intermediate in the catalytic mechanism. Residues S136, D275, D277, and D279 each contribute to the Mg(2+) site. The residue at position 136 (S136) is a Phosphoserine.

The protein belongs to the phosphohexose mutase family. It depends on Mg(2+) as a cofactor. Activated by phosphorylation.

The enzyme catalyses alpha-D-glucosamine 1-phosphate = D-glucosamine 6-phosphate. Functionally, catalyzes the conversion of glucosamine-6-phosphate to glucosamine-1-phosphate. The polypeptide is Phosphoglucosamine mutase (Trichodesmium erythraeum (strain IMS101)).